A 181-amino-acid polypeptide reads, in one-letter code: Ribosome maturation factor RimM (181 aa).

The PRC barrel domain maps to 100–177; sequence EEGFYWMQLI…QIQVDWQLED (78 aa).

The protein belongs to the RimM family. Binds ribosomal protein uS19.

It localises to the cytoplasm. An accessory protein needed during the final step in the assembly of 30S ribosomal subunit, possibly for assembly of the head region. Essential for efficient processing of 16S rRNA. May be needed both before and after RbfA during the maturation of 16S rRNA. It has affinity for free ribosomal 30S subunits but not for 70S ribosomes. The sequence is that of Ribosome maturation factor RimM from Hydrogenovibrio crunogenus (strain DSM 25203 / XCL-2) (Thiomicrospira crunogena).